We begin with the raw amino-acid sequence, 263 residues long: Indole-3-glycerol phosphate synthase (263 aa).

It belongs to the TrpC family.

It carries out the reaction 1-(2-carboxyphenylamino)-1-deoxy-D-ribulose 5-phosphate + H(+) = (1S,2R)-1-C-(indol-3-yl)glycerol 3-phosphate + CO2 + H2O. Its pathway is amino-acid biosynthesis; L-tryptophan biosynthesis; L-tryptophan from chorismate: step 4/5. The polypeptide is Indole-3-glycerol phosphate synthase (Laribacter hongkongensis (strain HLHK9)).